The following is a 444-amino-acid chain: Acyl-CoA 6-desaturase (444 aa).

Residues 1 to 131 are Cytoplasmic-facing; that stretch reads MGKGGNQGEG…DMNLFKTNHV (131 aa). Residues 18–95 enclose the Cytochrome b5 heme-binding domain; sequence MPTFSWEEIQ…LKPLLIGELA (78 aa). A helical transmembrane segment spans residues 132–152; the sequence is FFLLLLAHIIALESIAWFTVF. The Lumenal segment spans residues 153–157; that stretch reads YFGNG. A helical transmembrane segment spans residues 158 to 178; that stretch reads WIPTLITAFVLATSQAQAGWL. At 179–264 the chain is on the cytoplasmic side; the sequence is QHDYGHLSVY…KYLPYNHQHE (86 aa). The short motif at 180–184 is the Histidine box-1 element; it reads HDYGH. The Histidine box-2 motif lies at 217-221; that stretch reads HFQHH. The helical transmembrane segment at 265–285 threads the bilayer; it reads YFFLIGPPLLIPMYFQYQIIM. The Lumenal segment spans residues 286–305; that stretch reads TMIVHKNWVDLAWAISYYIR. The helical transmembrane segment at 306-326 threads the bilayer; sequence FFVTYIPFYGILGALLFLNFI. The Cytoplasmic segment spans residues 327 to 444; that stretch reads RFLESHWFVW…KLWLDAYLHK (118 aa). A Histidine box-3 motif is present at residues 382 to 386; that stretch reads QIEHH.

It belongs to the fatty acid desaturase type 1 family.

It is found in the endoplasmic reticulum membrane. The catalysed reaction is (9Z,12Z)-octadecadienoyl-CoA + 2 Fe(II)-[cytochrome b5] + O2 + 2 H(+) = (6Z,9Z,12Z)-octadecatrienoyl-CoA + 2 Fe(III)-[cytochrome b5] + 2 H2O. The enzyme catalyses (9Z,12Z,15Z)-octadecatrienoyl-CoA + 2 Fe(II)-[cytochrome b5] + O2 + 2 H(+) = (6Z,9Z,12Z,15Z)-octadecatetraenoyl-CoA + 2 Fe(III)-[cytochrome b5] + 2 H2O. It carries out the reaction (9Z,12Z,15Z,18Z,21Z)-tetracosapentaenoyl-CoA + 2 Fe(II)-[cytochrome b5] + O2 + 2 H(+) = (6Z,9Z,12Z,15Z,18Z,21Z)-tetracosahexaenoyl-CoA + 2 Fe(III)-[cytochrome b5] + 2 H2O. It catalyses the reaction (11E)-octadecenoyl-CoA + 2 Fe(II)-[cytochrome b5] + O2 + 2 H(+) = (6Z,11E)-octadecadienoyl-CoA + 2 Fe(III)-[cytochrome b5] + 2 H2O. The catalysed reaction is (11Z,14Z)-eicosadienoyl-CoA + 2 Fe(II)-[cytochrome b5] + O2 + 2 H(+) = (8Z,11Z,14Z)-eicosatrienoyl-CoA + 2 Fe(III)-[cytochrome b5] + 2 H2O. The enzyme catalyses (11Z,14Z,17Z)-eicosatrienoyl-CoA + 2 Fe(II)-[cytochrome b5] + O2 + 2 H(+) = (8Z,11Z,14Z,17Z)-eicosatetraenoyl-CoA + 2 Fe(III)-[cytochrome b5] + 2 H2O. It participates in lipid metabolism; polyunsaturated fatty acid biosynthesis. In terms of biological role, involved in the biosynthesis of highly unsaturated fatty acids (HUFA) from the essential polyunsaturated fatty acids (PUFA) linoleic acid (LA) (18:2n-6) and alpha-linolenic acid (ALA) (18:3n-3) precursors, acting as a fatty acyl-coenzyme A (CoA) desaturase that introduces a cis double bond at carbon 6 of the fatty acyl chain. Catalyzes the first and rate limiting step in this pathway which is the desaturation of LA (18:2n-6) and ALA (18:3n-3) into gamma-linoleate (GLA) (18:3n-6) and stearidonate (18:4n-3), respectively. Subsequently, in the biosynthetic pathway of HUFA n-3 series, it desaturates tetracosapentaenoate (24:5n-3) to tetracosahexaenoate (24:6n-3), which is then converted to docosahexaenoate (DHA)(22:6n-3), an important lipid for nervous system function. It can also desaturate (11E)-octadecenoate (trans-vaccenoate) at carbon 6 generating (6Z,11E)-octadecadienoate. In addition to Delta-6 activity, this enzyme exhibits Delta-8 activity with slight biases toward n-3 fatty acyl-CoA substrates. The sequence is that of Acyl-CoA 6-desaturase (FADS2) from Macaca fascicularis (Crab-eating macaque).